A 191-amino-acid polypeptide reads, in one-letter code: Peptidyl-tRNA hydrolase (191 aa).

Tyrosine 14 is a binding site for tRNA. Histidine 19 acts as the Proton acceptor in catalysis. Residues tyrosine 65, asparagine 67, and asparagine 113 each contribute to the tRNA site.

This sequence belongs to the PTH family. Monomer.

The protein resides in the cytoplasm. The enzyme catalyses an N-acyl-L-alpha-aminoacyl-tRNA + H2O = an N-acyl-L-amino acid + a tRNA + H(+). Hydrolyzes ribosome-free peptidyl-tRNAs (with 1 or more amino acids incorporated), which drop off the ribosome during protein synthesis, or as a result of ribosome stalling. Its function is as follows. Catalyzes the release of premature peptidyl moieties from peptidyl-tRNA molecules trapped in stalled 50S ribosomal subunits, and thus maintains levels of free tRNAs and 50S ribosomes. The polypeptide is Peptidyl-tRNA hydrolase (Nitrosospira multiformis (strain ATCC 25196 / NCIMB 11849 / C 71)).